The primary structure comprises 166 residues: MSSAIETKKVVVEEITSKLKESKSTIIVDYRGLNVAEVTELRKQLREANVEFKVYKNTMTRRAVEQAELDGLNDFLTGPNAIAFSTEDVVAPAKVLNEFAKKHEALEIKAGVIEGKVSTVEEVKALAELPSREGLLSMLLSVLQAPVRNLALATKAVAEQKEEQGA.

The protein belongs to the universal ribosomal protein uL10 family. In terms of assembly, part of the ribosomal stalk of the 50S ribosomal subunit. The N-terminus interacts with L11 and the large rRNA to form the base of the stalk. The C-terminus forms an elongated spine to which L12 dimers bind in a sequential fashion forming a multimeric L10(L12)X complex.

Its function is as follows. Forms part of the ribosomal stalk, playing a central role in the interaction of the ribosome with GTP-bound translation factors. This is Large ribosomal subunit protein uL10 from Bacillus licheniformis (strain ATCC 14580 / DSM 13 / JCM 2505 / CCUG 7422 / NBRC 12200 / NCIMB 9375 / NCTC 10341 / NRRL NRS-1264 / Gibson 46).